Consider the following 79-residue polypeptide: Conotoxin Tr6.2 (79 aa).

Positions 1 to 22 (MKLTCVLIISVLFLTASQLITA) are cleaved as a signal peptide. The propeptide occupies 23 to 47 (VYSRDKQQYRAARLRDEMRNLKGAR). Disulfide bonds link Cys-49-Cys-62, Cys-56-Cys-67, and Cys-61-Cys-77. Pro-60 and Pro-63 each carry 4-hydroxyproline.

This sequence belongs to the conotoxin O1 superfamily. In terms of tissue distribution, expressed by the venom duct.

The protein resides in the secreted. Its function is as follows. Ion channel inhibitor that inhibits the increase in intracellular calcium upon depolarization in DRG neurons. In vivo, both intraperitoneal and intracranial injections into mice induce hyperactivity. This chain is Conotoxin Tr6.2, found in Conus terebra (Sea snail).